Consider the following 546-residue polypeptide: MTPGELRRLYFIIHTFLSYGLDELIPKMRITLPLRIWRRMLFWMPNRHQDQPLGARLRLALQELGPVWIKFGQMLSTRRDLFPPHIADQLALLQDRVAPFEGKLAQQQIEKAMGGLPVETWFDDFSVEPLASASIAQVHTARLKENGKEVVIKVIRPDILPIIKADMKLIYRLARWVPRLLPDGRRLRPQEVVREYEKTLLDELNLLRESANAIQLRRNFEDSPMLYVPEVYPDYCSESMMVMERIYGIPVSDVEALEAQGTNMQLLAERGVQVFFTQVFRDSFFHADMHPGNIFVSYEHPEDPQYIGIDCGIVGSLNKEDKRYLAENFIAFFNRDYRKVAELHVDSGWVPPDTNVEEFEFAIRTVCEPIFEKPLAEISFGHVLLNLFNTARRFNMEVQPQLVLLQKTLLYVEGVGRQLYPQLDLWKTAKPFLESWIKDQVGIPALVRAFKDKAPFWIERMPEIPELVYQSLQQSKQLQTSVDTIVRDMRVRHVRQGQSRYLFGIGAVLLLSGTLLFIHRPEWGMMPGWLMAGGVVTWLIGWRKTH.

The Protein kinase domain occupies 124 to 502 (DFSVEPLASA…HVRQGQSRYL (379 aa)). ATP is bound by residues 130–138 (LASASIAQV) and lysine 153. The active-site Proton acceptor is the aspartate 288. A run of 2 helical transmembrane segments spans residues 501-521 (YLFG…IHRP) and 522-542 (EWGM…LIGW).

It belongs to the ABC1 family. UbiB subfamily.

It is found in the cell inner membrane. Its pathway is cofactor biosynthesis; ubiquinone biosynthesis [regulation]. Functionally, is probably a protein kinase regulator of UbiI activity which is involved in aerobic coenzyme Q (ubiquinone) biosynthesis. In Klebsiella pneumoniae subsp. pneumoniae (strain ATCC 700721 / MGH 78578), this protein is Probable protein kinase UbiB.